Here is a 427-residue protein sequence, read N- to C-terminus: MTLLEKAKCGEITAEMQYVAEKEGVRPEFICEGVANGDIVILYSSRENIHPVAVGKGLLTKVSASVGMYEEADTVDGEMAKIDAAVKAHADTIMDLSVRGPIEEMREKVLSTVDRPVGTLPMYETLSVAEAKYGTALDMTPDDMFDMIEKQASQGVAFIAVHPGTTLSVIHRAKDEGRIDPLVSYGGSHLIGWMLYNNTENPLYTEFDRLIEICKKYDVVLSFADGMRPGCIADSLDHAQVEELVILGGLVRRAREAGVQVMVKGPGHVPLDEIATTVQLEKKLCYGAPYFVFGCLPTDAAAGYDHITSAIGGAVAAYAGADFLCYVTPAEHIGMPNVDDVYQGVMASRIAAHAGDVAKGHPQAVKWDLDMSVARRAMNWKEQFKLSIDPETAERVWRERSTSFTSECTMCGKYCAMKIVEKYLRAE.

Belongs to the ThiC family. 5-hydroxybenzimidazole synthase subfamily. Requires [4Fe-4S] cluster as cofactor.

The enzyme catalyses 5-amino-1-(5-phospho-beta-D-ribosyl)imidazole + AH2 + S-adenosyl-L-methionine = 5-hydroxybenzimidazole + 5'-deoxyadenosine + formate + L-methionine + A + NH4(+) + phosphate + 2 H(+). The protein operates within cofactor biosynthesis; adenosylcobalamin biosynthesis. In terms of biological role, together with BzaB, catalyzes the conversion of aminoimidazole ribotide (AIR) to 5-hydroxybenzimidazole (5-HBI) in a radical S-adenosyl-L-methionine (SAM)-dependent reaction. Is thus involved in the anaerobic biosynthesis of dimethylbenzimidazole (DMB), the lower axial ligand of vitamin B12 (cobalamin). Requires BzaB for catalytic activity, as BzaA alone displays no activity. The polypeptide is 5-hydroxybenzimidazole synthase BzaA (Eubacterium limosum).